Here is a 454-residue protein sequence, read N- to C-terminus: MTPYLAAEDLSMFGRDPWWLVVVKAVFCFAFLMITVLFSIVWERKVVAWMQLRIGPNRHGPWGMLQSLADGIKLMLKEDLIVKRADKVVYVLAPIVAAIPAFMAIAVIPFGPADNEISIFGHRTAMQLTDLPIAMLYILAVASVGIYGIVLAGWSSGSTYPLLGGLRSCAQMISYEIAMGAAFASVFLYSGSMSTSTIVEQQHDRWYIVLLPVSFVIYIVTMVGETNRAPFDMPESEGDLVGGFNTEYSSIKFAMFMLAEYVNMVTVSAVSTTLFLGGWRAPWPISTFWEGANHGWWPMLWFVVKVQLLLFFFIWLRGTLPRVRYDQLMKLGWKVLIPVSVVWLMLVATVRTLRNENYDFADIALYVGGGVLVLLLLSFVADMFREKSKEAAAPAEEPAAFDPMAGGFPVPPLPGQTLPPVPRRRPRRDRELIVSGGPDTASDGPANGKEASDG.

Transmembrane regions (helical) follow at residues 18 to 38, 88 to 108, 131 to 151, 172 to 192, 206 to 226, 256 to 276, 296 to 316, 328 to 348, and 360 to 380; these read WWLV…TVLF, VVYV…IAVI, LPIA…GIVL, MISY…YSGS, WYIV…VGET, FMLA…TLFL, WWPM…FIWL, LMKL…MLVA, and FADI…LSFV. Residues 395-454 form a disordered region; the sequence is AEEPAAFDPMAGGFPVPPLPGQTLPPVPRRRPRRDRELIVSGGPDTASDGPANGKEASDG. A compositionally biased stretch (pro residues) spans 409-421; the sequence is PVPPLPGQTLPPV.

The protein belongs to the complex I subunit 1 family. NDH-1 is composed of 14 different subunits. Subunits NuoA, H, J, K, L, M, N constitute the membrane sector of the complex.

Its subcellular location is the cell membrane. It carries out the reaction a quinone + NADH + 5 H(+)(in) = a quinol + NAD(+) + 4 H(+)(out). NDH-1 shuttles electrons from NADH, via FMN and iron-sulfur (Fe-S) centers, to quinones in the respiratory chain. The immediate electron acceptor for the enzyme in this species is believed to be ubiquinone. Couples the redox reaction to proton translocation (for every two electrons transferred, four hydrogen ions are translocated across the cytoplasmic membrane), and thus conserves the redox energy in a proton gradient. This subunit may bind ubiquinone. The sequence is that of NADH-quinone oxidoreductase subunit H from Streptomyces avermitilis (strain ATCC 31267 / DSM 46492 / JCM 5070 / NBRC 14893 / NCIMB 12804 / NRRL 8165 / MA-4680).